The following is a 265-amino-acid chain: Methyl-coenzyme M reductase II subunit gamma (265 aa).

Arg-123 is a coenzyme M binding site.

Belongs to the methyl-coenzyme M reductase gamma subunit family. As to quaternary structure, MCR is a hexamer of two alpha, two beta, and two gamma chains, forming a dimer of heterotrimers. The cofactor is coenzyme F430.

It catalyses the reaction coenzyme B + methyl-coenzyme M = methane + coenzyme M-coenzyme B heterodisulfide. It participates in one-carbon metabolism; methyl-coenzyme M reduction; methane from methyl-coenzyme M: step 1/1. Component of the methyl-coenzyme M reductase (MCR) I that catalyzes the reductive cleavage of methyl-coenzyme M (CoM-S-CH3 or 2-(methylthio)ethanesulfonate) using coenzyme B (CoB or 7-mercaptoheptanoylthreonine phosphate) as reductant which results in the production of methane and the mixed heterodisulfide of CoB and CoM (CoM-S-S-CoB). This is the final step in methanogenesis. This chain is Methyl-coenzyme M reductase II subunit gamma (mrtG), found in Methanothermobacter thermautotrophicus (strain ATCC 29096 / DSM 1053 / JCM 10044 / NBRC 100330 / Delta H) (Methanobacterium thermoautotrophicum).